The primary structure comprises 209 residues: MGQKVHPRGFRLGITADWQATWFNEKNYKEYLLEDEEIRKVIKNKYAQAGISEIVIERPDSERVIAIIKSARPGIIIGKKGAEITELRQELEKRFNRRFIVNVEEIKNPEVDAQLVAENIASRIEKRASYKVVMKKAIFNAMKKGAKGIKIMVSGRLAGAEIARTEWYLKGRLPLQTIKSIIDYGTARAETKYGTIGIKVWIYKGDADI.

In terms of domain architecture, KH type-2 spans 38 to 107 (IRKVIKNKYA…RFIVNVEEIK (70 aa)).

It belongs to the universal ribosomal protein uS3 family. In terms of assembly, part of the 30S ribosomal subunit. Forms a tight complex with proteins S10 and S14.

Its function is as follows. Binds the lower part of the 30S subunit head. Binds mRNA in the 70S ribosome, positioning it for translation. The chain is Small ribosomal subunit protein uS3 from Thermosipho africanus (strain TCF52B).